Reading from the N-terminus, the 745-residue chain is Phosphoribosylformylglycinamidine synthase subunit PurL (745 aa).

H47 is a catalytic residue. The ATP site is built by Y50 and K90. Residue E92 coordinates Mg(2+). Substrate contacts are provided by residues 93–96 (SHNH) and R115. Residue H94 is the Proton acceptor of the active site. D116 lines the Mg(2+) pocket. Position 240 (Q240) interacts with substrate. D268 contacts Mg(2+). Residue 312–314 (ESQ) coordinates substrate. ATP contacts are provided by N501 and G538. Position 539 (N539) interacts with Mg(2+). Residue S541 participates in substrate binding.

This sequence belongs to the FGAMS family. Monomer. Part of the FGAM synthase complex composed of 1 PurL, 1 PurQ and 2 PurS subunits.

The protein localises to the cytoplasm. The catalysed reaction is N(2)-formyl-N(1)-(5-phospho-beta-D-ribosyl)glycinamide + L-glutamine + ATP + H2O = 2-formamido-N(1)-(5-O-phospho-beta-D-ribosyl)acetamidine + L-glutamate + ADP + phosphate + H(+). It functions in the pathway purine metabolism; IMP biosynthesis via de novo pathway; 5-amino-1-(5-phospho-D-ribosyl)imidazole from N(2)-formyl-N(1)-(5-phospho-D-ribosyl)glycinamide: step 1/2. Part of the phosphoribosylformylglycinamidine synthase complex involved in the purines biosynthetic pathway. Catalyzes the ATP-dependent conversion of formylglycinamide ribonucleotide (FGAR) and glutamine to yield formylglycinamidine ribonucleotide (FGAM) and glutamate. The FGAM synthase complex is composed of three subunits. PurQ produces an ammonia molecule by converting glutamine to glutamate. PurL transfers the ammonia molecule to FGAR to form FGAM in an ATP-dependent manner. PurS interacts with PurQ and PurL and is thought to assist in the transfer of the ammonia molecule from PurQ to PurL. This chain is Phosphoribosylformylglycinamidine synthase subunit PurL, found in Leptospira interrogans serogroup Icterohaemorrhagiae serovar copenhageni (strain Fiocruz L1-130).